A 4834-amino-acid polypeptide reads, in one-letter code: E3 ubiquitin-protein ligase HERC2 (4834 aa).

Positions 50–88 (TESTQNGELPPRKDDSVEPSGTKKEDLNDKEKKDEEETP) are disordered. Basic and acidic residues predominate over residues 59–84 (PPRKDDSVEPSGTKKEDLNDKEKKDE). Position 272 is a phosphothreonine (threonine 272). One copy of the RCC1 1-1 repeat lies at 415-461 (PTSHKGSLQEVIGWGLIGWKYYANVIGPIQCEGLANLGVTQIACAEK). The RCC1 1-2 repeat unit spans residues 462 to 512 (RFLILSRNGRVYTQAYNSDTLAPQLVQGLASRNIVKIAAHSDGHHYLALAA). The RCC1 1-3 repeat unit spans residues 513 to 568 (TGEVYSWGCGDGGRLGHGDTVPLEEPKVISAFSGKQAGKHVVHIACGSTYSAAITA). Residues 569–620 (EGELYTWGRGNYGRLGHGSSEDEAIPMLVAGLKGLKVIDVACGSGDAQTLAV) form an RCC1 1-4 repeat. Residues 623-674 (NGQVWSWGDGDYGKLGRGGSDGCKTPKLIEKLQDLDVVKVRCGSQFSIALTK) form an RCC1 1-5 repeat. Residue threonine 647 is modified to Phosphothreonine. One copy of the RCC1 1-6 repeat lies at 675–726 (DGQVYSWGKGDNQRLGHGTEEHVRYPKLLEGLQGKKVIDVAAGSTHCLALTE). The stretch at 728 to 778 (SEVHSWGSNDQCQHFDTLRVTKPEPAALPGLDTKHIVGIACGPAQSFAWSS) is one RCC1 1-7 repeat. Residues 948 to 980 (LHAAITAEIQDIEAKKEAQKEKEIDEQEANAST) are a coiled coil. A Cytochrome b5 heme-binding domain is found at 1207-1283 (VTLIRKADLE…MHAFCVGQYL (77 aa)). Residues 1555 to 1575 (RKKRVPKKPESTDDEEKIGNE) are disordered. Over residues 1566 to 1575 (TDDEEKIGNE) the composition is skewed to acidic residues. Position 1577 is a phosphoserine (serine 1577). Residues 1859–1932 (SGPELAAMMK…KYDLKLAELP (74 aa)) form the MIB/HERC2 domain. The interval 1933–1958 (AAAQPSAEDSDTEDDSEAEQTERNIH) is disordered. Residues 1940-1951 (EDSDTEDDSEAE) are compositionally biased toward acidic residues. Serine 1942 bears the Phosphoserine mark. The residue at position 1944 (threonine 1944) is a Phosphothreonine. Phosphoserine is present on serine 2454. The 77-residue stretch at 2554 to 2630 (RADFLSNDDY…RYIHVELIGY (77 aa)) folds into the CPH domain. The ZZ-type zinc-finger motif lies at 2703–2755 (HPGVTCDGCQMFPINGSRFKCRNCDDFDFCETCFKTKKHNTRHTFGRINEPGQ). Positions 2708, 2711, 2723, 2726, 2732, 2735, 2741, and 2745 each coordinate Zn(2+). Residues 2759-2936 (FCGRSGKQLK…ASDNEEEEDE (178 aa)) form the DOC domain. Serine 2928 carries the phosphoserine modification. The RCC1 2-1 repeat unit spans residues 2958–3009 (RTKVFVWGLNDKDQLGGLKGSKIKVPSFSETLSALNVVQVAGGSKSLFAVTV). The stretch at 3010-3064 (EGKVYACGEATNGRLGLGISSGTVPIPRQITALSSYVVKKVAVHSGGRHATALTV) is one RCC1 2-2 repeat. The stretch at 3065 to 3116 (DGKVFSWGEGDDGKLGHFSRMNCDKPRLIEALKTKRIRDIACGSSHSAALTS) is one RCC1 2-3 repeat. Residues 3118–3168 (GELYTWGLGEYGRLGHGDNTTQLKPKMVKVLLGHRVIQVACGSRDAQTLAL) form an RCC1 2-4 repeat. An RCC1 2-5 repeat occupies 3171–3222 (EGLVFSWGDGDFGKLGRGGSEGCNIPQNIERLNGQGVCQIECGAQFSLALTK). One copy of the RCC1 2-6 repeat lies at 3224-3274 (GVVWTWGKGDYFRLGHGSDVHVRKPQVVEGLRGKKIVHVAVGALHCLAVTD). The RCC1 2-7 repeat unit spans residues 3275 to 3326 (SGQVYAWGDNDHGQQGNGTTTVNRKPTLVQGLEGQKITRVACGSSHSVAWTT). Polar residues-rich tracts occupy residues 3602-3611 (SQSGRLSSQP) and 3618-3629 (HPYTDDTSTSGT). Positions 3602–3629 (SQSGRLSSQPVVVESSHPYTDDTSTSGT) are disordered. The RCC1 3-1 repeat unit spans residues 3951-4002 (SGTIYGWGHNHRGQLGGIEGAKVKVPTPCEALATLRPVQLIGGEQTLFAVTA). An RCC1 3-2 repeat occupies 4004 to 4056 (GKLYATGYGAGGRLGIGGTESVSTPTLLESIQHVFIKKVAVNSGGKHCLALSS). The RCC1 3-3 repeat unit spans residues 4058-4108 (GEVYSWGEAEDGKLGHGNRSPCDRPRVIESLRGIEVVDVAAGGAHSACVTA). The RCC1 3-4 repeat unit spans residues 4110-4162 (GDLYTWGKGRYGRLGHSDSEDQLKPKLVEALQGHRVVDIACGSGDAQTLCLTD). The stretch at 4164 to 4214 (DTVWSWGDGDYGKLGRGGSDGCKVPMKIDSLTGLGVVKVECGSQFSVALTK) is one RCC1 3-5 repeat. One copy of the RCC1 3-6 repeat lies at 4216–4266 (GAVYTWGKGDYHRLGHGSDDHVRRPRQVQGLQGKKVIAIATGSLHCVCCTE). The RCC1 3-7 repeat unit spans residues 4268–4318 (GEVYTWGDNDEGQLGDGTTNAIQRPRLVAALQGKKVNRVACGSAHTLAWST). One can recognise an HECT domain in the interval 4457–4794 (DSLLLPHRVW…IHFCKSIDTD (338 aa)). The Glycyl thioester intermediate role is filled by cysteine 4762. The segment at 4804-4834 (EPAADDSSDDSDNEDVDSFASDSTQDYLTGH) is disordered. Positions 4806–4820 (AADDSSDDSDNEDVD) are enriched in acidic residues. A phosphoserine mark is found at serine 4810, serine 4811, and serine 4814. A compositionally biased stretch (polar residues) spans 4823-4834 (ASDSTQDYLTGH). The residue at position 4827 (threonine 4827) is a Phosphothreonine.

In terms of assembly, interacts (when phosphorylated at Thr-4827 and sumoylated) with RNF8 (via FHA domain); this interaction increases after ionizing radiation (IR) treatment. Interacts with XPA. Interacts with NEURL4. Via its interaction with NEURL4, may indirectly interact with CCP110 and CEP97. In terms of processing, phosphorylation at Thr-4827 is required for interaction with RNF8. Post-translationally, sumoylated with SUMO1 by PIAS4 in response to double-strand breaks (DSBs), promoting the interaction with RNF8.

It is found in the cytoplasm. The protein resides in the cytoskeleton. It localises to the microtubule organizing center. Its subcellular location is the centrosome. The protein localises to the centriole. It is found in the nucleus. It catalyses the reaction S-ubiquitinyl-[E2 ubiquitin-conjugating enzyme]-L-cysteine + [acceptor protein]-L-lysine = [E2 ubiquitin-conjugating enzyme]-L-cysteine + N(6)-ubiquitinyl-[acceptor protein]-L-lysine.. It participates in protein modification; protein ubiquitination. E3 ubiquitin-protein ligase that regulates ubiquitin-dependent retention of repair proteins on damaged chromosomes. Recruited to sites of DNA damage in response to ionizing radiation (IR) and facilitates the assembly of UBE2N and RNF8 promoting DNA damage-induced formation of 'Lys-63'-linked ubiquitin chains. Acts as a mediator of binding specificity between UBE2N and RNF8. Involved in the maintenance of RNF168 levels. E3 ubiquitin-protein ligase that promotes the ubiquitination and proteasomal degradation of XPA which influences the circadian oscillation of DNA excision repair activity. By controlling the steady-state expression of the IGF1R receptor, indirectly regulates the insulin-like growth factor receptor signaling pathway. Also modulates iron metabolism by regulating the basal turnover of FBXL5. This chain is E3 ubiquitin-protein ligase HERC2, found in Homo sapiens (Human).